Consider the following 493-residue polypeptide: Cytochrome c-552 (493 aa).

The first 25 residues, 1-25, serve as a signal peptide directing secretion; it reads MEKKLKSWQGWLLSGGSMVVVFVLG. Histidine 116 is a heme c binding site. Cysteine 144, cysteine 147, and lysine 148 together coordinate heme. The heme c site is built by cysteine 182, cysteine 185, histidine 186, cysteine 224, cysteine 227, and histidine 228. Residues glutamate 230, tyrosine 231, lysine 276, and glutamine 278 each coordinate Ca(2+). Tyrosine 231 is a binding site for substrate. Histidine 279 is a binding site for substrate. Residues histidine 290, cysteine 297, cysteine 300, histidine 301, histidine 315, cysteine 328, cysteine 331, histidine 332, and histidine 407 each contribute to the heme c site.

Belongs to the cytochrome c-552 family. Ca(2+) serves as cofactor. Heme c is required as a cofactor.

The protein resides in the periplasm. The enzyme catalyses 6 Fe(III)-[cytochrome c] + NH4(+) + 2 H2O = 6 Fe(II)-[cytochrome c] + nitrite + 8 H(+). It functions in the pathway nitrogen metabolism; nitrate reduction (assimilation). Catalyzes the reduction of nitrite to ammonia, consuming six electrons in the process. The chain is Cytochrome c-552 from Bacteroides thetaiotaomicron (strain ATCC 29148 / DSM 2079 / JCM 5827 / CCUG 10774 / NCTC 10582 / VPI-5482 / E50).